Consider the following 278-residue polypeptide: 4-deoxy-L-threo-5-hexosulose-uronate ketol-isomerase (278 aa).

Residues histidine 196, histidine 198, glutamate 203, and histidine 245 each coordinate Zn(2+).

The protein belongs to the KduI family. Requires Zn(2+) as cofactor.

It carries out the reaction 5-dehydro-4-deoxy-D-glucuronate = 3-deoxy-D-glycero-2,5-hexodiulosonate. It functions in the pathway glycan metabolism; pectin degradation; 2-dehydro-3-deoxy-D-gluconate from pectin: step 4/5. Its function is as follows. Catalyzes the isomerization of 5-dehydro-4-deoxy-D-glucuronate to 3-deoxy-D-glycero-2,5-hexodiulosonate. The protein is 4-deoxy-L-threo-5-hexosulose-uronate ketol-isomerase of Enterobacter sp. (strain 638).